The following is a 186-amino-acid chain: Imidazoleglycerol-phosphate dehydratase (186 aa).

It belongs to the imidazoleglycerol-phosphate dehydratase family.

It localises to the cytoplasm. The catalysed reaction is D-erythro-1-(imidazol-4-yl)glycerol 3-phosphate = 3-(imidazol-4-yl)-2-oxopropyl phosphate + H2O. The protein operates within amino-acid biosynthesis; L-histidine biosynthesis; L-histidine from 5-phospho-alpha-D-ribose 1-diphosphate: step 6/9. The protein is Imidazoleglycerol-phosphate dehydratase of Dictyoglomus thermophilum (strain ATCC 35947 / DSM 3960 / H-6-12).